Reading from the N-terminus, the 306-residue chain is Protoheme IX farnesyltransferase (306 aa).

9 consecutive transmembrane segments (helical) span residues 35–55 (LIVF…PTWL), 61–81 (LIAC…NCLV), 106–126 (LTLA…YVWV), 129–149 (LTMW…TVIL), 157–177 (IVIG…AMTG), 183–203 (ALIL…ALAL), 224–244 (EFTR…CLMP), 245–265 (FIFK…SIGF), and 286–306 (RFSL…HYLI).

It belongs to the UbiA prenyltransferase family. Protoheme IX farnesyltransferase subfamily.

The protein resides in the cell inner membrane. It carries out the reaction heme b + (2E,6E)-farnesyl diphosphate + H2O = Fe(II)-heme o + diphosphate. It participates in porphyrin-containing compound metabolism; heme O biosynthesis; heme O from protoheme: step 1/1. Functionally, converts heme B (protoheme IX) to heme O by substitution of the vinyl group on carbon 2 of heme B porphyrin ring with a hydroxyethyl farnesyl side group. The protein is Protoheme IX farnesyltransferase of Polaromonas naphthalenivorans (strain CJ2).